The following is a 353-amino-acid chain: Protein disulfide isomerase CRELD2 (353 aa).

The first 24 residues, Met-1–Ala-24, serve as a signal peptide directing secretion. The short motif at Cys-31 to Cys-34 is the CXXC element. Disulfide bonds link Cys-31-Cys-34, Cys-140-Cys-154, Cys-148-Cys-166, and Cys-168-Cys-177. The EGF-like 1 domain occupies Asp-136–Thr-178. An FU 1 repeat occupies His-193 to Pro-240. The N-linked (GlcNAc...) asparagine glycan is linked to Asn-251. An FU 2 repeat occupies Ser-253–Val-302. Residues Cys-263–Cys-266 carry the CXXC motif. 4 disulfide bridges follow: Cys-263-Cys-266, Cys-294-Cys-308, Cys-301-Cys-317, and Cys-319-Cys-330. In terms of domain architecture, EGF-like 2; calcium-binding spans Asp-290–Val-331. Residues Pro-332–Leu-353 form a disordered region. The span at Glu-342–Leu-353 shows a compositional bias: polar residues.

Belongs to the CRELD family. Interacts with CHRNA4. Component of a complex containing at least CRELD2, MANF, MATN3 and PDIA4. As to expression, ubiquitously expressed. Highly expressed in skeletal muscle, heart, liver, kidney and placenta.

The protein localises to the endoplasmic reticulum. The enzyme catalyses Catalyzes the rearrangement of -S-S- bonds in proteins.. In terms of biological role, protein disulfide isomerase. Might play a role in the unfolded protein response. May regulate transport of alpha4-beta2 neuronal acetylcholine receptor. This chain is Protein disulfide isomerase CRELD2 (CRELD2), found in Homo sapiens (Human).